A 617-amino-acid polypeptide reads, in one-letter code: MPKYRSFTTTQGRNMSGARSLWRATGMTEKDFTKPIIAVVNSFSQFVPGHIHLQEVGKLICGEIQKSGGVAKEFNTIAIDDGIAMGHSGMLYSLPSRELIADSIEYVVNAHCADAMICISNCDKITPGMLMASLRLNIPSVFISGGPMEAGKIQKNNKTIKIDLVDAIINGGKSHISDDFIKDIEASACPTCGSCSGMFTANSMNCLTEAIGLALPGNGTLLATHIDRKNLFIKSAQIIVKITEDYYKKNNTNVLPRNIANKESFENAMMLDIAMGGSTNTILHLLAAAQEAKVDFKMSNINKLSKKIPHICKVAPSTSLYHVEDVHRAGGVMGILGELNRFNLLHKNTRNILQLNLEETLDEYDIFSTNNPDVINMFQAGPGGIRTTKAYSQNFRWTRLDYDRKNGCIRSCKHAYSQDGGLAILYGNLAKNGCIIKTAGIDAKNYIFSGVAKVYESQEEAASSILNGEIISGDIIVIRYEGPKGGPGMQEMLYPTTYLKSMNLDKTCALITDGRFSGGTSGISIGHISPEAANKGIIALVKNGDIININIPERTIHLNITEKELSHRILQEESKGPLSYKPHSRKRYISSALKAYAFFSTSADQGAVRDYKKISNI.

Asp-81 contacts Mg(2+). Cys-122 is a binding site for [2Fe-2S] cluster. Mg(2+) is bound by residues Asp-123 and Lys-124. Lys-124 is modified (N6-carboxylysine). Cys-195 serves as a coordination point for [2Fe-2S] cluster. Glu-491 is a binding site for Mg(2+). Ser-517 acts as the Proton acceptor in catalysis.

It belongs to the IlvD/Edd family. Homodimer. The cofactor is [2Fe-2S] cluster. Mg(2+) serves as cofactor.

The catalysed reaction is (2R)-2,3-dihydroxy-3-methylbutanoate = 3-methyl-2-oxobutanoate + H2O. The enzyme catalyses (2R,3R)-2,3-dihydroxy-3-methylpentanoate = (S)-3-methyl-2-oxopentanoate + H2O. Its pathway is amino-acid biosynthesis; L-isoleucine biosynthesis; L-isoleucine from 2-oxobutanoate: step 3/4. It functions in the pathway amino-acid biosynthesis; L-valine biosynthesis; L-valine from pyruvate: step 3/4. In terms of biological role, functions in the biosynthesis of branched-chain amino acids. Catalyzes the dehydration of (2R,3R)-2,3-dihydroxy-3-methylpentanoate (2,3-dihydroxy-3-methylvalerate) into 2-oxo-3-methylpentanoate (2-oxo-3-methylvalerate) and of (2R)-2,3-dihydroxy-3-methylbutanoate (2,3-dihydroxyisovalerate) into 2-oxo-3-methylbutanoate (2-oxoisovalerate), the penultimate precursor to L-isoleucine and L-valine, respectively. This chain is Dihydroxy-acid dehydratase, found in Buchnera aphidicola subsp. Acyrthosiphon pisum (strain 5A).